A 139-amino-acid chain; its full sequence is MSWSGLLRGLSMSLNYGLALAPRPWGTRPMATLNQLHRRGPPKFPPSKPGPTEGRPQLKGVVLRTFIRKPKKPNSANRKCCRVRLSTGREAVCFIPGEGHNLQEHHVVLVQGGRTQDLPGVKLKVVRGKYDCGHVQKKK.

Residues 1–29 (MSWSGLLRGLSMSLNYGLALAPRPWGTRP) constitute a mitochondrion transit peptide. A disordered region spans residues 37–57 (HRRGPPKFPPSKPGPTEGRPQ).

The protein belongs to the universal ribosomal protein uS12 family. Component of the mitochondrial ribosome small subunit (28S) which comprises a 12S rRNA and about 30 distinct proteins.

The protein localises to the mitochondrion. The chain is Small ribosomal subunit protein uS12m (MRPS12) from Bos taurus (Bovine).